A 194-amino-acid polypeptide reads, in one-letter code: Ras-related protein RabU (194 aa).

19-27 (GYDYECGIK) lines the GTP pocket. The short motif at 42–50 (PESQVGVDF) is the Effector region element. Residues 68 to 72 (PQNKY) and 130 to 133 (NNSE) each bind GTP.

Belongs to the small GTPase superfamily. Rab family.

The sequence is that of Ras-related protein RabU (rabU) from Dictyostelium discoideum (Social amoeba).